Here is a 60-residue protein sequence, read N- to C-terminus: Sperm protamine P1 (60 aa).

A disordered region spans residues 1 to 60 (MARYRHSRSRSRSRYRRRRRRRSRYRSRRRRXRRRRRSRRGRRRRGYSRRRYSRRRRRRY).

This sequence belongs to the protamine P1 family. Testis.

It is found in the nucleus. It localises to the chromosome. Protamines substitute for histones in the chromatin of sperm during the haploid phase of spermatogenesis. They compact sperm DNA into a highly condensed, stable and inactive complex. This chain is Sperm protamine P1 (PRM1), found in Petrogale concinna (Nabarlek).